The sequence spans 364 residues: DNA polymerase IV (364 aa).

Residues 14–198 (IIHIDMDAFF…LPIEKFHGVG (185 aa)) form the UmuC domain. The Mg(2+) site is built by aspartate 18 and aspartate 116. The active site involves glutamate 117.

This sequence belongs to the DNA polymerase type-Y family. As to quaternary structure, monomer. The cofactor is Mg(2+).

Its subcellular location is the cytoplasm. It carries out the reaction DNA(n) + a 2'-deoxyribonucleoside 5'-triphosphate = DNA(n+1) + diphosphate. In terms of biological role, poorly processive, error-prone DNA polymerase involved in untargeted mutagenesis. Copies undamaged DNA at stalled replication forks, which arise in vivo from mismatched or misaligned primer ends. These misaligned primers can be extended by PolIV. Exhibits no 3'-5' exonuclease (proofreading) activity. May be involved in translesional synthesis, in conjunction with the beta clamp from PolIII. The protein is DNA polymerase IV of Streptococcus pyogenes serotype M6 (strain ATCC BAA-946 / MGAS10394).